The primary structure comprises 236 residues: Endonuclease V (236 aa).

The Mg(2+) site is built by aspartate 47 and aspartate 115.

The protein belongs to the endonuclease V family. It depends on Mg(2+) as a cofactor.

The protein localises to the cytoplasm. It catalyses the reaction Endonucleolytic cleavage at apurinic or apyrimidinic sites to products with a 5'-phosphate.. Its function is as follows. DNA repair enzyme involved in the repair of deaminated bases. Selectively cleaves double-stranded DNA at the second phosphodiester bond 3' to a deoxyinosine leaving behind the intact lesion on the nicked DNA. The chain is Endonuclease V from Xanthomonas campestris pv. campestris (strain B100).